Consider the following 221-residue polypeptide: Proline-rich protein 20A (221 aa).

2 disordered regions span residues 1 to 103 (MEEP…QRQG) and 137 to 174 (SLSETGPPPGTVQEGPGPDVAQPELGFQEPPAAPGPQA). The span at 42-53 (PAQPAQPAKPIA) shows a compositional bias: low complexity. The segment covering 63-72 (PARPESPPPA) has biased composition (pro residues). Residues 75 to 93 (GRRRGGSRRPGRGRGRRAG) are compositionally biased toward basic residues.

The protein belongs to the PRR20 family.

This chain is Proline-rich protein 20A (PRR20A), found in Homo sapiens (Human).